A 352-amino-acid chain; its full sequence is Photosystem II protein D1 (352 aa).

At T2 the chain carries N-acetylthreonine. T2 is modified (phosphothreonine). 3 consecutive transmembrane segments (helical) span residues 29-46 (YIGW…TATS), 118-133 (HFLL…EWEL), and 142-156 (WIAV…AASA). Residue H118 participates in chlorophyll a binding. Y126 serves as a coordination point for pheophytin a. [CaMn4O5] cluster is bound by residues D170 and E189. A helical transmembrane segment spans residues 197-218 (FHMLGVAGVFGGSLFSAMHGSL). Position 198 (H198) interacts with chlorophyll a. Residues H215 and 264 to 265 (SF) contribute to the a quinone site. H215 serves as a coordination point for Fe cation. Fe cation is bound at residue H272. A helical membrane pass occupies residues 274–288 (FLAAWPVIGIWFTAL). H332, E333, D342, and A344 together coordinate [CaMn4O5] cluster. Positions 345-352 (STNSSSNN) are excised as a propeptide.

This sequence belongs to the reaction center PufL/M/PsbA/D family. In terms of assembly, PSII is composed of 1 copy each of membrane proteins PsbA, PsbB, PsbC, PsbD, PsbE, PsbF, PsbH, PsbI, PsbJ, PsbK, PsbL, PsbM, PsbT, PsbX, PsbY, PsbZ, Psb30/Ycf12, at least 3 peripheral proteins of the oxygen-evolving complex and a large number of cofactors. It forms dimeric complexes. It depends on The D1/D2 heterodimer binds P680, chlorophylls that are the primary electron donor of PSII, and subsequent electron acceptors. It shares a non-heme iron and each subunit binds pheophytin, quinone, additional chlorophylls, carotenoids and lipids. D1 provides most of the ligands for the Mn4-Ca-O5 cluster of the oxygen-evolving complex (OEC). There is also a Cl(-1) ion associated with D1 and D2, which is required for oxygen evolution. The PSII complex binds additional chlorophylls, carotenoids and specific lipids. as a cofactor. Tyr-161 forms a radical intermediate that is referred to as redox-active TyrZ, YZ or Y-Z. In terms of processing, C-terminally processed by CTPA; processing is essential to allow assembly of the oxygen-evolving complex and thus photosynthetic growth.

It localises to the plastid. Its subcellular location is the chloroplast thylakoid membrane. It catalyses the reaction 2 a plastoquinone + 4 hnu + 2 H2O = 2 a plastoquinol + O2. Its function is as follows. This is one of the two reaction center proteins of photosystem II. Photosystem II (PSII) is a light-driven water:plastoquinone oxidoreductase that uses light energy to abstract electrons from H(2)O, generating O(2) and a proton gradient subsequently used for ATP formation. It consists of a core antenna complex that captures photons, and an electron transfer chain that converts photonic excitation into a charge separation. The D1/D2 (PsbA/PsbD) reaction center heterodimer binds P680, the primary electron donor of PSII as well as several subsequent electron acceptors. In Chlamydomonas reinhardtii (Chlamydomonas smithii), this protein is Photosystem II protein D1.